We begin with the raw amino-acid sequence, 304 residues long: Killer cell immunoglobulin-like receptor 2DS4 (304 aa).

The signal sequence occupies residues 1-21 (MSLMVIIMACVGFFLLQGAWP). Topologically, residues 22 to 245 (QEGVHRKPSF…SKTGNPRHLH (224 aa)) are extracellular. Ig-like C2-type domains lie at 42–107 (EETV…VPHS) and 142–205 (GENV…FRDA). Cysteines 49 and 100 form a disulfide. Residues Asn67, Asn84, Asn144, Asn178, and Asn211 are each glycosylated (N-linked (GlcNAc...) asparagine). A disulfide bridge links Cys149 with Cys198. Positions 220–239 (VTGNPSNSWPSPTEPSSKTG) are disordered. Residues 246 to 265 (VLIGTSVVKIPFTILLFFLL) traverse the membrane as a helical segment. The Cytoplasmic portion of the chain corresponds to 266-304 (HRWCSDKKNAAVMDQEPAGNRTVNSEDSDEQDHQEVSYA). A disordered region spans residues 280–304 (QEPAGNRTVNSEDSDEQDHQEVSYA).

The protein belongs to the immunoglobulin superfamily. As to quaternary structure, interacts with HLA-F; this interaction is direct.

The protein localises to the cell membrane. Receptor on natural killer (NK) cells for HLA-C alleles. Does not inhibit the activity of NK cells. This is Killer cell immunoglobulin-like receptor 2DS4 from Homo sapiens (Human).